The following is a 233-amino-acid chain: Large ribosomal subunit protein uL1 (233 aa).

The protein belongs to the universal ribosomal protein uL1 family. Part of the 50S ribosomal subunit.

Binds directly to 23S rRNA. The L1 stalk is quite mobile in the ribosome, and is involved in E site tRNA release. Functionally, protein L1 is also a translational repressor protein, it controls the translation of the L11 operon by binding to its mRNA. The chain is Large ribosomal subunit protein uL1 from Brucella canis (strain ATCC 23365 / NCTC 10854 / RM-666).